Here is a 67-residue protein sequence, read N- to C-terminus: DNA-directed RNA polymerase subunit omega (67 aa).

This sequence belongs to the RNA polymerase subunit omega family. The RNAP catalytic core consists of 2 alpha, 1 beta, 1 beta' and 1 omega subunit. When a sigma factor is associated with the core the holoenzyme is formed, which can initiate transcription.

It carries out the reaction RNA(n) + a ribonucleoside 5'-triphosphate = RNA(n+1) + diphosphate. Promotes RNA polymerase assembly. Latches the N- and C-terminal regions of the beta' subunit thereby facilitating its interaction with the beta and alpha subunits. This is DNA-directed RNA polymerase subunit omega from Listeria welshimeri serovar 6b (strain ATCC 35897 / DSM 20650 / CCUG 15529 / CIP 8149 / NCTC 11857 / SLCC 5334 / V8).